Consider the following 80-residue polypeptide: Teretoxin Tan6.1 (80 aa).

The signal sequence occupies residues 1–21 (MATSGRLLCLCLVLGLVFESL). The propeptide occupies 22–34 (GHPGARLPKDGKR).

This sequence belongs to the teretoxin M (TM) superfamily. Contains 3 disulfide bonds. Expressed by the venom duct.

The protein localises to the secreted. This is Teretoxin Tan6.1 from Terebra anilis (Auger snail).